The following is a 472-amino-acid chain: CAAX prenyl protease 1 homolog (472 aa).

Topologically, residues 1–8 are lumenal; sequence MDVGGALD. Residues 9-29 form a helical membrane-spanning segment; that stretch reads LYGCSVNVYNAILIFIWVLFL. Over 30-75 the chain is Cytoplasmic; that stretch reads WETYINLRQLKVAKRVTESPEEIKCLMNDVDFDKSRRYAIDKMNFD. Residues 76–96 traverse the membrane as a helical segment; that stretch reads IVSGFYNILSLSAVLYFQLIA. Topologically, residues 97 to 124 are lumenal; it reads WAWHKSQEHMLFVCSYAPRSFGTTEGSE. A helical transmembrane segment spans residues 125-145; that stretch reads ILFSLLFTVYVALFQFFESLP. Topologically, residues 146-175 are cytoplasmic; the sequence is WSYYRHFVIEERYGFNKQTIGFFIKDRLKS. A helical membrane pass occupies residues 176 to 196; it reads LAVGLVIGLPIISMLVWIIKA. Topologically, residues 197–207 are lumenal; the sequence is GGHYFYIYAYG. Residues 208–228 form a helical membrane-spanning segment; it reads FTFVVSFIIMFIYPEFIAPIF. At 229 to 340 the chain is on the cytoplasmic side; it reads DRYEHFPDCE…LGHWKLKHMT (112 aa). Histidine 329 serves as a coordination point for Zn(2+). Glutamate 330 is a catalytic residue. Histidine 333 is a Zn(2+) binding site. The chain crosses the membrane as a helical span at residues 341–361; the sequence is FNLIIAQINIFFMFFAFGQLI. The Lumenal segment spans residues 362–382; sequence NVDQLFVDFGFPPSTAPILIR. Residues 383-403 form a helical membrane-spanning segment; the sequence is LIVVFQFIFMPYSSVLEFLMT. Topologically, residues 404 to 472 are cytoplasmic; sequence MLSRKFEFQA…AIDAKMGKEK (69 aa). Glutamate 410 is a binding site for Zn(2+). Aspartate 414 functions as the Proton donor in the catalytic mechanism.

This sequence belongs to the peptidase M48A family. In terms of assembly, homodimer; disulfide-linked. It depends on Zn(2+) as a cofactor.

The protein localises to the endoplasmic reticulum membrane. The enzyme catalyses Hydrolyzes the peptide bond -P2-(S-farnesyl or geranylgeranyl)C-P1'-P2'-P3'-COOH where P1' and P2' are amino acids with aliphatic side chains and P3' is any C-terminal residue.. With respect to regulation, inhibited by ethylenediaminetetraacetic acid (EDTA) but not by serine, aspartic or cysteine protease inhibitors. Inhibited by high concentration of Zn(2+) (&gt; 0.1 mM). Functionally, zinc-dependent metalloproteinase. Proteolytically removes the C-terminal three residues of farnesylated proteins. In Taenia solium (Pork tapeworm), this protein is CAAX prenyl protease 1 homolog.